The primary structure comprises 556 residues: Formate--tetrahydrofolate ligase (556 aa).

ATP is bound at residue 65–72 (TPAGEGKS).

This sequence belongs to the formate--tetrahydrofolate ligase family.

The catalysed reaction is (6S)-5,6,7,8-tetrahydrofolate + formate + ATP = (6R)-10-formyltetrahydrofolate + ADP + phosphate. Its pathway is one-carbon metabolism; tetrahydrofolate interconversion. This Clostridium perfringens (strain 13 / Type A) protein is Formate--tetrahydrofolate ligase.